Here is a 346-residue protein sequence, read N- to C-terminus: Putative glycosyltransferase HI_0523 (346 aa).

The protein belongs to the glycosyltransferase 9 family.

The polypeptide is Putative glycosyltransferase HI_0523 (Haemophilus influenzae (strain ATCC 51907 / DSM 11121 / KW20 / Rd)).